The following is a 481-amino-acid chain: Inosine-5'-monophosphate dehydrogenase (481 aa).

2 CBS domains span residues Val92–Val148 and Met152–Asn209. NAD(+) contacts are provided by residues Asp244 and Gly293–Gly295. 2 residues coordinate K(+): Gly295 and Gly297. Ser298 contributes to the IMP binding site. Residue Cys300 participates in K(+) binding. The active-site Thioimidate intermediate is Cys300. Residues Asp333–Gly335, Gly356–Ser357, and Tyr380–Gly384 each bind IMP. Arg396 acts as the Proton acceptor in catalysis. Glu410 is a binding site for IMP. K(+) is bound by residues Glu464, Ser465, and His466.

The protein belongs to the IMPDH/GMPR family. In terms of assembly, homotetramer. Requires K(+) as cofactor.

It catalyses the reaction IMP + NAD(+) + H2O = XMP + NADH + H(+). It participates in purine metabolism; XMP biosynthesis via de novo pathway; XMP from IMP: step 1/1. Its activity is regulated as follows. Mycophenolic acid (MPA) is a non-competitive inhibitor that prevents formation of the closed enzyme conformation by binding to the same site as the amobile flap. In contrast, mizoribine monophosphate (MZP) is a competitive inhibitor that induces the closed conformation. MPA is a potent inhibitor of mammalian IMPDHs but a poor inhibitor of the bacterial enzymes. MZP is a more potent inhibitor of bacterial IMPDH. Its function is as follows. Catalyzes the conversion of inosine 5'-phosphate (IMP) to xanthosine 5'-phosphate (XMP), the first committed and rate-limiting step in the de novo synthesis of guanine nucleotides, and therefore plays an important role in the regulation of cell growth. The polypeptide is Inosine-5'-monophosphate dehydrogenase (Helicobacter pylori (strain ATCC 700392 / 26695) (Campylobacter pylori)).